Consider the following 2367-residue polypeptide: MSLVNRKQLEKMANVRFRVQEDEYVAILDALEEYHNMSENTVVEKYLKLKDINSLTDTYIDTYKKSGRNKALKKFKEYLVTEILELKNSNLTPVEKNLHFIWIGGQINDTAINYINQWKDVNSDYNVNVFYDSNAFLINTLKKTIIESASNDTLESFRENLNDPEFNHTAFFRKRMQIIYDKQQNFINYYKAQKEENPDLIIDDIVKTYLSNEYSKDIDELNAYIEESLNKVTENSGNDVRNFEEFKTGEVFNLYEQELVERWNLAGASDILRVAILKNIGGVYLDVDMLPGIHPDLFKDINKPDSVKTAVDWEEMQLEAIMKYKEYIPEYTSKHFDTLDEEVQSSFESVLASKSDKSEIFLPLGGIEVSPLEVKVAFAKGSIIDQALISAKDSYCSDLLIKQIQNRYKILNDTLGPIISQGNDFNTTMNNFGESLGAIANEENISFIAKIGSYLRVGFYPEANTTITLSGPTIYAGAYKDLLTFKEMSIDTSILSSELRNFEFPKVNISQATEQEKNSLWQFNEERAKIQFEEYKKNYFEGALGEDDNLDFSQNTVTDKEYLLEKISSSTKSSERGYVHYIVQLQGDKISYEAACNLFAKNPYDSILFQKNIEDSEVAYYYNPTDSEIQEIDKYRIPDRISDRPKIKLTLIGHGKAEFNTDIFAGLDVDSLSSEIETILDLAKADISPKSIEINLLGCNMFSYSVNVEETYPGKLLLRVKDKVSELMPSISQDSIIVSANQYEVRINSEGRRELLDHSGEWINKEESIIKDISSKEYISFNPKENKIIVKSKNLPELSTLLQEIRNNSNSSDIELEEKVMLAECEINVISNIETQVVEERIEEAKSLTSDSINYIKNEFKLIESISDALYDLKQQNELEESHFISFEDISKTDEGFSIRFIDKETGESIFVETEKAIFSEYANHITEEISKLKDTIFDTVNGKLVKKVTLDATHEVNTLNAAFFIQSLIGYNSSKESLSNLSVAMKVQVYAQLFSTGLNTITDAAKVVELVSTALDETIDLLPTLSEGLPVIATIIDGVSLGASIKELSETSDPLLRQEIEAKIGIMAVNLTAATTAIITSSLGIASGFSILLVPLAGISAGIPSLVNNELILRAEAKNVVDYFGHISLAESEGAFTLLDDKIMMPQDDLVISEIDFNNNSITLGKCEIWRMEGGSGHTVTDDIDHFFSAPSTTYREPYLSIYDVLDVKEEELDLSKDLMVLPNAPDRIFGWERGWTPGLRSLENDGTKLLDRIRDHYEGQFYWRFFAFIADSVITKLKPRYEDTNIRISLDSNTRSFIVPVITTEYIREKLSYSFYGSGGTYALSLSQYNMNINIELNENDTWVIDVDNVVRDVTIESDKIKKGDLIENILSKLSIEDNKIILDNHEINFSGTLNGGNGFVSLTFSILEGINAVIEVDLLSKSYKVLISGELKTLMANSNSVQQKIDYIGLNSELQKNIPYSFMDDEGKENGFINCFTKEGLFVSELSDVVLIIKVYMDNSKPPFGYYSNDLKDVKVITKDDVIIITGYYLKDDIKISLSFTIQDKNTIKLNGVYLDENGVAEILKFMNKKGSTNTSDSLMSFLESMNIKSIFIKSLKSNAKLILDTNFIISGTTFIGQFEFICDKDNNIQPYFIKFNTLETKYTLYVGNRQNMIVEPNYNLDDSGDISSTVINFSQKYLYGIDSCVNKVVISPGIYTDEINITPVHEANNTYPEVIVLDTNYISEKINININDLSIRYVWSNDGSDFILMSTDEENKVSQVKIRFTNVFKGNTISDKISFNFSDKQDISINKIISTFTPSYYVEGLLNYDLGLISLYNEKFYINNLGMMVSGLVYINDSLYYFKPPIKNLITGFTTIGDDKYYFNPDNGGPASVGETIIDGKNYYFSQNGVLQTGVFSTEDGFKYFAPADTLDENLEGEAIDFTGKLIIDENVYYFGDNYRAAIEWQTLDDEVYYFSTDTGRAFKGLNQIGDDKFYFNSDGIMQKGFVNINDKTFYFDDSGVMKSGYTEIDGRYFYFAENGEMQIGVFNTADGFKYFAHHDEDLGNEEGEALSYSGILNFNNKIYYFDDSFTAVVGWKDLEDGSKYYFDENTAEASIGISIINDGKYYFNDSGIMQIGFVTINNEVFYFSDSGIVESGMQNIDDNYFYISENGLVQIGVFDTSDGYKYFAPANTVNDNIYGQAVEYSGLVRVNEDVYSFGESYTIETGWIYDSENESDKYYFDPEAKKAYKGINVIDDIKYYFDENGIMRTGLITFEDNHYYFNEDGEMQYGYLNIEDKMFYFSEDGIMQIGVFNTPDGFKYFAHQNTLDENFEGESINYTGWLDLDEKRYYFTDEYIAATGSVIIDGEEYYFDPDTAQLVISE.

The segment at serine 2–leucine 91 is four-helical bundle. One can recognise a GT44 domain in the interval lysine 96 to leucine 469. The glucosyltransferase region stretch occupies residues lysine 96–leucine 469. Residues isoleucine 101–isoleucine 103, asparagine 139, serine 269–arginine 273, and aspartate 286–aspartate 288 contribute to the UDP-alpha-D-glucose site. Positions 286, 288, and 516 each coordinate Mg(2+). UDP-alpha-D-glucose is bound at residue serine 519–tryptophan 521. The interval glycine 545 to threonine 800 is autoprocessing region. Positions 546 and 547 each coordinate Zn(2+). One can recognise a Peptidase C80 domain in the interval serine 568–serine 775. 3 residues coordinate 1D-myo-inositol hexakisphosphate: tyrosine 578, lysine 601, and lysine 648. Histidine 654 lines the Zn(2+) pocket. The active-site For protease activity is histidine 654. Cysteine 699 serves as the catalytic Nucleophile; for protease activity. Histidine 758 contributes to the Zn(2+) binding site. Lysine 765, lysine 776, and lysine 793 together coordinate 1D-myo-inositol hexakisphosphate. The segment at leucine 801–aspartate 1501 is translocation region. Interaction with host frizzled receptors FZD1, FZD2 and FZD7 regions lie at residues leucine 1434 to alanine 1439, serine 1487 to asparagine 1512, and serine 1598 to lysine 1600. 19 Cell wall-binding repeats span residues valine 1833 to asparagine 1852, isoleucine 1854 to glycine 1873, serine 1876 to leucine 1895, phenylalanine 1926 to alanine 1945, alanine 1946 to arginine 1965, phenylalanine 1967 to methionine 1986, glutamine 1987 to methionine 2006, lysine 2007 to methionine 2026, tyrosine 2057 to alanine 2076, valine 2077 to glutamate 2097, serine 2099 to methionine 2118, glutamine 2119 to valine 2138, glutamate 2139 to valine 2158, glutamate 2209 to lysine 2231, tyrosine 2233 to methionine 2252, arginine 2253 to methionine 2272, glutamine 2273 to methionine 2292, tyrosine 2323 to alanine 2342, and alanine 2343 to glutamine 2362. A receptor-binding (CROPS) region region spans residues glycine 1835–glutamate 2367.

Belongs to the clostridial glucosylating toxin (LCGT) family. As to quaternary structure, interacts with host FZD1. Interacts with host FZD2; interaction promotes toxin entry into host cell and occupies the binding site for Wnt-adducted palmitoleate in FZD2, leading to prevent Wnt-binding and downstream Wnt signaling. Interacts with host FZD7. Interacts with host CSPG4. Interacts with host NECTIN3/PVRL3. The cofactor is Zn(2+). Mn(2+) serves as cofactor. Requires Mg(2+) as cofactor. In terms of processing, undergoes autocatalytic cleavage to release the N-terminal part (Glucosyltransferase TcdB), which constitutes the active part of the toxin, in the host cytosol. 1D-myo-inositol hexakisphosphate-binding (InsP6) activates the peptidase C80 domain and promotes autoprocessing.

It is found in the secreted. The protein localises to the host endosome membrane. Its subcellular location is the host cytoplasm. It localises to the host cytosol. The protein resides in the host cell membrane. It carries out the reaction L-threonyl-[protein] + UDP-alpha-D-glucose = 3-O-(alpha-D-glucosyl)-L-threonyl-[protein] + UDP + H(+). With respect to regulation, protease activity is activated upon binding to 1D-myo-inositol hexakisphosphate (InsP6), which induces conformational reorganization. Precursor of a cytotoxin that targets and disrupts the colonic epithelium, inducing the host inflammatory and innate immune responses and resulting in diarrhea and pseudomembranous colitis. TcdB constitutes the main toxin that mediates the pathology of C.difficile infection, an opportunistic pathogen that colonizes the colon when the normal gut microbiome is disrupted. Compared to TcdA, TcdB is more virulent and more important for inducing the host inflammatory and innate immune responses. This form constitutes the precursor of the toxin: it enters into host cells and mediates autoprocessing to release the active toxin (Glucosyltransferase TcdB) into the host cytosol. Targets colonic epithelia by binding to the frizzled receptors FZD1, FZD2 and FZD7, and enters host cells via clathrin-mediated endocytosis. Frizzled receptors constitute the major host receptors in the colonic epithelium, but other receptors, such as CSPG4 or NECTIN3/PVRL3, have been identified. Binding to carbohydrates and sulfated glycosaminoglycans on host cell surface also contribute to entry into cells. Once entered into host cells, acidification in the endosome promotes the membrane insertion of the translocation region and formation of a pore, leading to translocation of the GT44 and peptidase C80 domains across the endosomal membrane. This activates the peptidase C80 domain and autocatalytic processing, releasing the N-terminal part (Glucosyltransferase TcdB), which constitutes the active part of the toxin, in the cytosol. Its function is as follows. Active form of the toxin, which is released into the host cytosol following autoprocessing and inactivates small GTPases. Acts by mediating monoglucosylation of small GTPases of the Rho family (Rac1, RhoA, RhoB, RhoC, RhoG and Cdc42) in host cells at the conserved threonine residue located in the switch I region ('Thr-37/35'), using UDP-alpha-D-glucose as the sugar donor. Monoglucosylation of host small GTPases completely prevents the recognition of the downstream effector, blocking the GTPases in their inactive form, leading to actin cytoskeleton disruption and cell death, resulting in the loss of colonic epithelial barrier function. The polypeptide is Toxin B (Clostridioides difficile (Peptoclostridium difficile)).